The sequence spans 392 residues: Acetyl-CoA acetyltransferase (392 aa).

C85 serves as the catalytic Acyl-thioester intermediate. Residues C206, S207, V209, and K332 each coordinate CoA. The active-site Proton acceptor is the H336.

This sequence belongs to the thiolase-like superfamily. Thiolase family. Interacts with HMG-CoA synthase (HMGCS) that catalyzes the second step in the pathway and with a DUF35 protein. The acetoacetyl-CoA thiolase/HMG-CoA synthase complex channels the intermediate via a fused CoA-binding site, which allows for efficient coupling of the endergonic thiolase reaction with the exergonic HMGCS reaction.

The catalysed reaction is 2 acetyl-CoA = acetoacetyl-CoA + CoA. Its pathway is metabolic intermediate biosynthesis; (R)-mevalonate biosynthesis; (R)-mevalonate from acetyl-CoA: step 1/3. Its function is as follows. Catalyzes the condensation of two acetyl-coA molecules into acetoacetyl-CoA. Functions in the mevalonate (MVA) pathway leading to isopentenyl diphosphate (IPP), a key precursor for the biosynthesis of isoprenoid compounds that are building blocks of archaeal membrane lipids. The polypeptide is Acetyl-CoA acetyltransferase (Methanocaldococcus jannaschii (strain ATCC 43067 / DSM 2661 / JAL-1 / JCM 10045 / NBRC 100440) (Methanococcus jannaschii)).